We begin with the raw amino-acid sequence, 200 residues long: Large ribosomal subunit protein uL4 (200 aa).

The interval 42–65 (TRAQKTRSEVSGGGAKPWRQKGTG) is disordered.

This sequence belongs to the universal ribosomal protein uL4 family. As to quaternary structure, part of the 50S ribosomal subunit.

In terms of biological role, one of the primary rRNA binding proteins, this protein initially binds near the 5'-end of the 23S rRNA. It is important during the early stages of 50S assembly. It makes multiple contacts with different domains of the 23S rRNA in the assembled 50S subunit and ribosome. Functionally, forms part of the polypeptide exit tunnel. This Vibrio campbellii (strain ATCC BAA-1116) protein is Large ribosomal subunit protein uL4.